The primary structure comprises 122 residues: Large ribosomal subunit protein uL14 (122 aa).

The protein belongs to the universal ribosomal protein uL14 family. In terms of assembly, part of the 50S ribosomal subunit. Forms a cluster with proteins L3 and L19. In the 70S ribosome, L14 and L19 interact and together make contacts with the 16S rRNA in bridges B5 and B8.

Functionally, binds to 23S rRNA. Forms part of two intersubunit bridges in the 70S ribosome. The chain is Large ribosomal subunit protein uL14 from Maridesulfovibrio salexigens (strain ATCC 14822 / DSM 2638 / NCIMB 8403 / VKM B-1763) (Desulfovibrio salexigens).